We begin with the raw amino-acid sequence, 601 residues long: Elongation factor 4 (601 aa).

The tr-type G domain maps to 5–187; the sequence is IRKKNFCIIA…AICKYVPSPK (183 aa). GTP-binding positions include 17-22 and 134-137; these read DHGKST and NKID.

It belongs to the TRAFAC class translation factor GTPase superfamily. Classic translation factor GTPase family. LepA subfamily.

It is found in the cell inner membrane. It carries out the reaction GTP + H2O = GDP + phosphate + H(+). Its function is as follows. Required for accurate and efficient protein synthesis under certain stress conditions. May act as a fidelity factor of the translation reaction, by catalyzing a one-codon backward translocation of tRNAs on improperly translocated ribosomes. Back-translocation proceeds from a post-translocation (POST) complex to a pre-translocation (PRE) complex, thus giving elongation factor G a second chance to translocate the tRNAs correctly. Binds to ribosomes in a GTP-dependent manner. The chain is Elongation factor 4 from Borreliella afzelii (strain PKo) (Borrelia afzelii).